Here is a 411-residue protein sequence, read N- to C-terminus: Imidazolonepropionase (411 aa).

Fe(3+)-binding residues include histidine 78 and histidine 80. Residues histidine 78 and histidine 80 each contribute to the Zn(2+) site. Arginine 87, tyrosine 150, and histidine 183 together coordinate 4-imidazolone-5-propanoate. N-formimidoyl-L-glutamate is bound at residue tyrosine 150. Histidine 248 serves as a coordination point for Fe(3+). Zn(2+) is bound at residue histidine 248. Glutamine 251 contributes to the 4-imidazolone-5-propanoate binding site. Aspartate 322 serves as a coordination point for Fe(3+). Residue aspartate 322 coordinates Zn(2+). Residues asparagine 324 and glycine 326 each coordinate N-formimidoyl-L-glutamate. Threonine 327 contributes to the 4-imidazolone-5-propanoate binding site.

This sequence belongs to the metallo-dependent hydrolases superfamily. HutI family. Requires Zn(2+) as cofactor. It depends on Fe(3+) as a cofactor.

It is found in the cytoplasm. The catalysed reaction is 4-imidazolone-5-propanoate + H2O = N-formimidoyl-L-glutamate. It participates in amino-acid degradation; L-histidine degradation into L-glutamate; N-formimidoyl-L-glutamate from L-histidine: step 3/3. Catalyzes the hydrolytic cleavage of the carbon-nitrogen bond in imidazolone-5-propanoate to yield N-formimidoyl-L-glutamate. It is the third step in the universal histidine degradation pathway. The polypeptide is Imidazolonepropionase (Flavobacterium psychrophilum (strain ATCC 49511 / DSM 21280 / CIP 103535 / JIP02/86)).